A 238-amino-acid chain; its full sequence is MNESQFIEALRAEGFELSETQLSQFKRYFEMLVEWNEKMNLTAITDREEVYLKHFYDSLSAAFHFDFTKVETVCDVGAGAGFPSLPLKILFPHLHVTIIDSLNKRITFLNELALALGLEGVAFHHGRAEEFGKNKKFREQFDVVTARAVARMTVLAEYCLPLAKVGGSFVALKAAKVSDEMADAKNALAVLGGKEKATHQFLLPGEMSERNIVVVDKLRKTPGKYPRKAGTPAKEPLI.

Residues glycine 77, phenylalanine 82, 128 to 129 (AE), and arginine 147 each bind S-adenosyl-L-methionine.

Belongs to the methyltransferase superfamily. RNA methyltransferase RsmG family.

The protein localises to the cytoplasm. Its function is as follows. Specifically methylates the N7 position of guanine in position 535 of 16S rRNA. This chain is Ribosomal RNA small subunit methyltransferase G, found in Exiguobacterium sp. (strain ATCC BAA-1283 / AT1b).